A 296-amino-acid polypeptide reads, in one-letter code: Lipoyl synthase (296 aa).

7 residues coordinate [4Fe-4S] cluster: cysteine 37, cysteine 42, cysteine 48, cysteine 63, cysteine 67, cysteine 70, and serine 276. The region spanning 49–265 (WSKKHTTVMI…ERLAKTKGFL (217 aa)) is the Radical SAM core domain.

This sequence belongs to the radical SAM superfamily. Lipoyl synthase family. [4Fe-4S] cluster serves as cofactor.

The protein resides in the cytoplasm. The catalysed reaction is [[Fe-S] cluster scaffold protein carrying a second [4Fe-4S](2+) cluster] + N(6)-octanoyl-L-lysyl-[protein] + 2 oxidized [2Fe-2S]-[ferredoxin] + 2 S-adenosyl-L-methionine + 4 H(+) = [[Fe-S] cluster scaffold protein] + N(6)-[(R)-dihydrolipoyl]-L-lysyl-[protein] + 4 Fe(3+) + 2 hydrogen sulfide + 2 5'-deoxyadenosine + 2 L-methionine + 2 reduced [2Fe-2S]-[ferredoxin]. It participates in protein modification; protein lipoylation via endogenous pathway; protein N(6)-(lipoyl)lysine from octanoyl-[acyl-carrier-protein]: step 2/2. In terms of biological role, catalyzes the radical-mediated insertion of two sulfur atoms into the C-6 and C-8 positions of the octanoyl moiety bound to the lipoyl domains of lipoate-dependent enzymes, thereby converting the octanoylated domains into lipoylated derivatives. This chain is Lipoyl synthase, found in Rickettsia rickettsii (strain Iowa).